The sequence spans 167 residues: Putative C-type lectin protein FPV008/FPV253 (167 aa).

Residues 49–152 (CPDEWIGYNS…SCIFHERTIC (104 aa)) enclose the C-type lectin domain. Intrachain disulfides connect cysteine 77-cysteine 152 and cysteine 131-cysteine 144.

The protein is Putative C-type lectin protein FPV008/FPV253 of Vertebrata (FPV).